The primary structure comprises 742 residues: MATKYPKFSRDLAQDPTTRRIWYAIATGNDFESHDGMTEENLYQKIFATHFGHVAIIFLWASSLLFHVAWQGNFEQWIKDPLHIRPIAHAIWDPHFGKPAIEAFSQGGANYPVNIAYSGVYHWWYTIGMRTNNDLYQGSVFLLLLAALFLFAGWLHLQPKFRPSLTWFKSAEPRLNHHLAGLFGVSSLAWAGHLIHVAIPESRGVHVGWRNFLTTLPHPAGLTPFWTGNWGVYAQNADTTGHIFGTSQGAGTAILTFLGGFHPQTESLWLTDMAHHHLAIAVIFIIAGHMYRTNFGIGHSIKEMLNAKQFFGIRTEGQFNLPHQGLYDTYNNSLHFQLSIHLAALGTALSLVAQHMYSLPPYAFIAKDYTTQAALYTHHQYIAGFLMIGAFAHAGIFWIRDYDPEQNQGNVLDRVLKHKEAIISHLSWVSLFLGFHTLGIYVHNDVVVAFGTPEKQILIEPVFAQFIQAAHGKLLYGMDTLLSNPDSIAYTAWPNHANVWLPNWLDAINSGTNSLFLTIGPGDFLVHHAIALGLHTTTLICVKGALDARGTKLMPDKKDFGFTFPCDGPGRGGTCQTSSWEQSFYLALFWMLNLLGWVTFYWHWKHLGVWQGNVAQFNENSTYLMGWFRDYLWANSAQLINGYNPYGTNNLSVWAWMFLFGHLVWATGFMFLISWRGYWQELIETLVWAHERTPLANLVRWKDKPVALSIVQGWLVGLAHFTVGYILTYAAFLIASTAGKFG.

Transmembrane regions (helical) follow at residues 46 to 69, 135 to 158, 175 to 199, 273 to 291, 334 to 357, 373 to 399, 421 to 443, and 524 to 542; these read IFAT…FHVA, LYQG…LHLQ, LNHH…HVAI, MAHH…GHMY, LHFQ…QHMY, AALY…IFWI, AIIS…IYVH, and FLVH…LICV. [4Fe-4S] cluster-binding residues include cysteine 566 and cysteine 575. The next 2 membrane-spanning stretches (helical) occupy residues 583 to 604 and 651 to 673; these read SFYL…YWHW and LSVW…MFLI. The chlorophyll a site is built by histidine 662, methionine 670, and tyrosine 678. Position 679 (tryptophan 679) interacts with phylloquinone. Residues 715 to 735 form a helical membrane-spanning segment; the sequence is LVGLAHFTVGYILTYAAFLIA.

It belongs to the PsaA/PsaB family. In terms of assembly, the PsaA/B heterodimer binds the P700 chlorophyll special pair and subsequent electron acceptors. PSI consists of a core antenna complex that captures photons, and an electron transfer chain that converts photonic excitation into a charge separation. The cyanobacterial PSI reaction center is composed of one copy each of PsaA,B,C,D,E,F,I,J,K,L,M and X, and forms trimeric complexes. The cofactor is PSI electron transfer chain: 5 chlorophyll a, 1 chlorophyll a', 2 phylloquinones and 3 4Fe-4S clusters. PSI core antenna: 90 chlorophyll a, 22 carotenoids, 3 phospholipids and 1 galactolipid. P700 is a chlorophyll a/chlorophyll a' dimer, A0 is one or more chlorophyll a, A1 is one or both phylloquinones and FX is a shared 4Fe-4S iron-sulfur center..

It localises to the cellular thylakoid membrane. The catalysed reaction is reduced [plastocyanin] + hnu + oxidized [2Fe-2S]-[ferredoxin] = oxidized [plastocyanin] + reduced [2Fe-2S]-[ferredoxin]. PsaA and PsaB bind P700, the primary electron donor of photosystem I (PSI), as well as the electron acceptors A0, A1 and FX. PSI is a plastocyanin/cytochrome c6-ferredoxin oxidoreductase, converting photonic excitation into a charge separation, which transfers an electron from the donor P700 chlorophyll pair to the spectroscopically characterized acceptors A0, A1, FX, FA and FB in turn. Oxidized P700 is reduced on the lumenal side of the thylakoid membrane by plastocyanin or cytochrome c6. This chain is Photosystem I P700 chlorophyll a apoprotein A2 2 (psaB2), found in Nostoc sp. (strain PCC 7120 / SAG 25.82 / UTEX 2576).